The sequence spans 291 residues: uncharacterized protein (291 aa).

The HTH tetR-type domain occupies 2 to 62; that stretch reads KEKEKLIIET…SMLNYYYDKT (61 aa). A DNA-binding region (H-T-H motif) is located at residues 25-44; the sequence is SVQEIAKECKISKGAFYIYF.

This is an uncharacterized protein from Bacillus subtilis (strain 168).